We begin with the raw amino-acid sequence, 300 residues long: GTP cyclohydrolase FolE2 (300 aa).

It belongs to the GTP cyclohydrolase IV family.

The enzyme catalyses GTP + H2O = 7,8-dihydroneopterin 3'-triphosphate + formate + H(+). Its pathway is cofactor biosynthesis; 7,8-dihydroneopterin triphosphate biosynthesis; 7,8-dihydroneopterin triphosphate from GTP: step 1/1. In terms of biological role, converts GTP to 7,8-dihydroneopterin triphosphate. This chain is GTP cyclohydrolase FolE2, found in Bacillus licheniformis (strain ATCC 14580 / DSM 13 / JCM 2505 / CCUG 7422 / NBRC 12200 / NCIMB 9375 / NCTC 10341 / NRRL NRS-1264 / Gibson 46).